Consider the following 473-residue polypeptide: Putative malate dehydrogenase 1B (473 aa).

Belongs to the LDH/MDH superfamily. MDH type 2 family.

In Bos taurus (Bovine), this protein is Putative malate dehydrogenase 1B (MDH1B).